The sequence spans 275 residues: Large ribosomal subunit protein uL2c (275 aa).

Positions 28–53 (TPTKSLTHANHRARGRNHSGSITTRW) are disordered.

The protein belongs to the universal ribosomal protein uL2 family. As to quaternary structure, part of the 50S ribosomal subunit.

The protein resides in the plastid. It is found in the chloroplast. The protein is Large ribosomal subunit protein uL2c (rpl2) of Nephroselmis olivacea (Green alga).